Reading from the N-terminus, the 129-residue chain is Small ribosomal subunit protein eS6 (129 aa).

Belongs to the eukaryotic ribosomal protein eS6 family.

The sequence is that of Small ribosomal subunit protein eS6 from Archaeoglobus fulgidus (strain ATCC 49558 / DSM 4304 / JCM 9628 / NBRC 100126 / VC-16).